Here is a 362-residue protein sequence, read N- to C-terminus: Phospho-N-acetylmuramoyl-pentapeptide-transferase (362 aa).

The next 10 membrane-spanning stretches (helical) occupy residues 28-48 (GAVLTALIVAFLVGPRIIAWL), 75-95 (TMGGFMILLALSVSTLLWADL), 100-120 (VWIVLLVTLGYGLIGFWDDYL), 134-154 (AKLVAEIAIALAAAAWVWSLQ), 170-190 (VLLQLSWFYLPFAVFIIVGAG), 201-221 (GLAIVPVMIASGVFAIFSYLV), 241-261 (LAVFCGALVGAGLGFLWFNAP), 265-285 (VFMGDTGSLALGGALGAISVV), 290-310 (LVLGIVGGLFVLETVSVIVQV), and 339-359 (TVVIRFWIIATILALAGLATL).

The protein belongs to the glycosyltransferase 4 family. MraY subfamily. Mg(2+) is required as a cofactor.

The protein resides in the cell inner membrane. It catalyses the reaction UDP-N-acetyl-alpha-D-muramoyl-L-alanyl-gamma-D-glutamyl-meso-2,6-diaminopimeloyl-D-alanyl-D-alanine + di-trans,octa-cis-undecaprenyl phosphate = di-trans,octa-cis-undecaprenyl diphospho-N-acetyl-alpha-D-muramoyl-L-alanyl-D-glutamyl-meso-2,6-diaminopimeloyl-D-alanyl-D-alanine + UMP. Its pathway is cell wall biogenesis; peptidoglycan biosynthesis. In terms of biological role, catalyzes the initial step of the lipid cycle reactions in the biosynthesis of the cell wall peptidoglycan: transfers peptidoglycan precursor phospho-MurNAc-pentapeptide from UDP-MurNAc-pentapeptide onto the lipid carrier undecaprenyl phosphate, yielding undecaprenyl-pyrophosphoryl-MurNAc-pentapeptide, known as lipid I. In Paramagnetospirillum magneticum (strain ATCC 700264 / AMB-1) (Magnetospirillum magneticum), this protein is Phospho-N-acetylmuramoyl-pentapeptide-transferase.